The chain runs to 334 residues: HTH-type transcriptional repressor PurR (334 aa).

In terms of domain architecture, HTH lacI-type spans 2–56 (ATIKDVARMAGVSTTTVSHVINKTRFVAEATQKKVLAAVDDLNYAPSAVARSLKC). A DNA-binding region (H-T-H motif) is located at residues 4–23 (IKDVARMAGVSTTTVSHVIN). Residues 48–56 (SAVARSLKC) mediate DNA binding. Hypoxanthine is bound by residues F73, K189, T191, F220, and D274.

As to quaternary structure, homodimer.

The protein operates within purine metabolism; purine nucleotide biosynthesis [regulation]. Is the main repressor of the genes involved in the de novo synthesis of purine nucleotides, regulating purB, purC, purEK, purF, purHD, purL, purMN and guaBA expression. PurR is allosterically activated to bind its cognate DNA by binding the purine corepressors, hypoxanthine or guanine, thereby effecting transcription repression. The chain is HTH-type transcriptional repressor PurR from Photobacterium profundum (strain SS9).